We begin with the raw amino-acid sequence, 878 residues long: F-box DNA helicase protein 1 (878 aa).

The region spanning 8 to 56 (SCKFYRLPLEIIPLICRFLSVQDIQSFIRVFPSFQTILDSSNDLFWKKK) is the F-box domain.

It belongs to the helicase family. UvrD subfamily. In terms of assembly, part of the E3 ubiquitin ligase Skp1-Cullin-1-F-box (SCF) complex. Interacts with skp1 and ssb1. It depends on Mg(2+) as a cofactor. Mn(2+) is required as a cofactor.

It is found in the cytoplasm. The protein localises to the nucleus. It catalyses the reaction Couples ATP hydrolysis with the unwinding of duplex DNA by translocating in the 3'-5' direction.. The catalysed reaction is ATP + H2O = ADP + phosphate + H(+). It participates in protein modification; protein ubiquitination. Its function is as follows. Involved in ATP-dependent DNA-unwinding in a 3' to 5' direction, and ATP-ase activities stimulated by the single-stranded DNA-binding protein ssb1. Essential for viability and normal growth of stationary phase cells and in the absence of either srs2 or rqh1 DNA helicase. Involved in DNA recombination repair of strand breaks and stalled or collapsed replication forks, on the rhp51-dependent pathway: promotes rhp51 filament dissolution from stalled forks, thereby inhibiting homologous recombination and preventing excessive recombination. Ubiquitination and DNA helicase activities are essential for controlling rhp51-dependent recombination in the absence of rad22. Plays a role in the processing of toxic recombination intermediates. Promotes proper chromosome segregation. This is F-box DNA helicase protein 1 (fbh1) from Schizosaccharomyces pombe (strain 972 / ATCC 24843) (Fission yeast).